The sequence spans 136 residues: Small ribosomal subunit protein uS8c (136 aa).

It belongs to the universal ribosomal protein uS8 family. Part of the 30S ribosomal subunit.

The protein resides in the plastid. Its function is as follows. One of the primary rRNA binding proteins, it binds directly to 16S rRNA central domain where it helps coordinate assembly of the platform of the 30S subunit. In Helicosporidium sp. subsp. Simulium jonesii (Green alga), this protein is Small ribosomal subunit protein uS8c (rps8).